The following is a 348-amino-acid chain: uncharacterized protein (348 aa).

The first 26 residues, 1-26, serve as a signal peptide directing secretion; sequence MKKRIILLLAVIIAAAAAGVAFYVAK.

This is an uncharacterized protein from Bacillus subtilis (strain 168).